Reading from the N-terminus, the 256-residue chain is (R)-S-adenosyl-L-methionine hydrolase (256 aa).

Residues D7, H41, D68, and N183 each contribute to the adenosine site. (R)-S-adenosyl-L-methionine is bound by residues N183, Y212, S226, E231, V234, and M236. Adenosine is bound at residue V234.

This sequence belongs to the SAM hydrolase / SAM-dependent halogenase family. Homotrimer.

It catalyses the reaction (R)-S-adenosyl-L-methionine + H2O = adenosine + L-methionine + H(+). Catalyzes the hydrolysis of S-adenosyl-L-methionine (SAM) into adenosine and L-methionine. Is likely stereoselective, specifically hydrolyzing (R)-S-adenosyl-L-methionine ((R)-SAM), the inactive form of the ubiquitous cofactor SAM, and not the active form of SAM, (S)-S-adenosyl-L-methionine. Probaly plays a role in preventing accumulation of (R)-S-adenosyl-L-methionine in cells; maintenance of (S)-S-denosyl-L-methionine homochirality is important for cellular health given that the (R)-form is largely inactive as a methyl donor and can function as an inhibitor of methyltransferases. Is unable to mediate a fluorination or chlorination reaction with SAM. The sequence is that of (R)-S-adenosyl-L-methionine hydrolase from Pyrococcus horikoshii (strain ATCC 700860 / DSM 12428 / JCM 9974 / NBRC 100139 / OT-3).